A 155-amino-acid polypeptide reads, in one-letter code: Ribosomal RNA large subunit methyltransferase H (155 aa).

S-adenosyl-L-methionine is bound by residues L72, G104, and 123-128; that span reads LAKITL.

This sequence belongs to the RNA methyltransferase RlmH family. In terms of assembly, homodimer.

It is found in the cytoplasm. The enzyme catalyses pseudouridine(1915) in 23S rRNA + S-adenosyl-L-methionine = N(3)-methylpseudouridine(1915) in 23S rRNA + S-adenosyl-L-homocysteine + H(+). Its function is as follows. Specifically methylates the pseudouridine at position 1915 (m3Psi1915) in 23S rRNA. The protein is Ribosomal RNA large subunit methyltransferase H of Mycoplasma capricolum subsp. capricolum (strain California kid / ATCC 27343 / NCTC 10154).